We begin with the raw amino-acid sequence, 489 residues long: Para-nitrobenzyl esterase (489 aa).

The active-site Acyl-ester intermediate is the S189. Residue S189 is modified to Phosphoserine. Residues E310 and H399 each act as charge relay system in the active site.

Belongs to the type-B carboxylesterase/lipase family. As to quaternary structure, monomer.

Functionally, catalyzes hydrolysis of several beta-lactam antibiotic PNB esters to the corresponding free acid and PNB alcohol. The chain is Para-nitrobenzyl esterase (pnbA) from Bacillus subtilis (strain 168).